The following is a 950-amino-acid chain: UPF0182 protein P9303_14611 (950 aa).

The next 9 helical transmembrane spans lie at leucine 20–phenylalanine 40, tryptophan 53–tryptophan 73, leucine 102–leucine 122, isoleucine 141–asparagine 161, cysteine 173–isoleucine 193, phenylalanine 209–valine 229, cysteine 259–leucine 279, serine 308–glutamine 328, and leucine 335–valine 355.

The protein belongs to the UPF0182 family.

The protein resides in the cell membrane. In Prochlorococcus marinus (strain MIT 9303), this protein is UPF0182 protein P9303_14611.